A 381-amino-acid chain; its full sequence is Anti-sigma-I factor RsgI (381 aa).

At 1-63 the chain is on the cytoplasmic side; sequence MRRGIIVEKN…FDFFKLRPFK (63 aa). The 49-residue stretch at 2-50 folds into the RsgI N-terminal anti-sigma domain; it reads RRGIIVEKNKKFVTLLTPDGQFLKAKNDRHSYEIGEEIMLPSETRMGRR. Residues 64 to 84 form a helical membrane-spanning segment; that stretch reads MGIFTMTAIMLFIFIVLPVFS. At 85 to 381 the chain is on the extracellular side; sequence NNKAYAYMTI…NEDSPSAPGE (297 aa). The disordered stretch occupies residues 198–381; it reads SDMQTREKAK…NEDSPSAPGE (184 aa). 4 stretches are compositionally biased toward basic and acidic residues: residues 200–210, 219–244, 273–321, and 349–359; these read MQTREKAKKEG, SNEKNDNKDIKDDSSKPSGEEDQKSD, GDQK…DKGN, and SRRDNASDRRN.

In terms of assembly, interacts (via RsgI N-terminal anti-sigma domain) with SigI.

The protein resides in the cell membrane. Anti-sigma factor for SigI. Negatively regulates SigI activity through direct interaction. The sequence is that of Anti-sigma-I factor RsgI from Bacillus subtilis (strain 168).